Consider the following 484-residue polypeptide: Protein nucleotidyltransferase YdiU (484 aa).

The ATP site is built by G92, G94, R95, K115, D127, G128, R178, and R185. Residue D258 is the Proton acceptor of the active site. Mg(2+)-binding residues include N259 and D268. Residue D268 participates in ATP binding.

It belongs to the SELO family. The cofactor is Mg(2+). It depends on Mn(2+) as a cofactor.

It carries out the reaction L-seryl-[protein] + ATP = 3-O-(5'-adenylyl)-L-seryl-[protein] + diphosphate. It catalyses the reaction L-threonyl-[protein] + ATP = 3-O-(5'-adenylyl)-L-threonyl-[protein] + diphosphate. The enzyme catalyses L-tyrosyl-[protein] + ATP = O-(5'-adenylyl)-L-tyrosyl-[protein] + diphosphate. The catalysed reaction is L-histidyl-[protein] + UTP = N(tele)-(5'-uridylyl)-L-histidyl-[protein] + diphosphate. It carries out the reaction L-seryl-[protein] + UTP = O-(5'-uridylyl)-L-seryl-[protein] + diphosphate. It catalyses the reaction L-tyrosyl-[protein] + UTP = O-(5'-uridylyl)-L-tyrosyl-[protein] + diphosphate. Its function is as follows. Nucleotidyltransferase involved in the post-translational modification of proteins. It can catalyze the addition of adenosine monophosphate (AMP) or uridine monophosphate (UMP) to a protein, resulting in modifications known as AMPylation and UMPylation. The protein is Protein nucleotidyltransferase YdiU of Mycolicibacterium smegmatis (strain ATCC 700084 / mc(2)155) (Mycobacterium smegmatis).